Reading from the N-terminus, the 62-residue chain is Protein A37.5 homolog (62 aa).

The protein belongs to the orthopoxviruses A37.5 protein family.

This is Protein A37.5 homolog (A40_5R) from Homo sapiens (Human).